The sequence spans 366 residues: Adenosine deaminase (366 aa).

Zn(2+)-binding residues include H19 and H21. Residues H21, D23, and G181 each coordinate substrate. Zn(2+) is bound at residue H208. Catalysis depends on E211, which acts as the Proton donor. Residue D304 participates in Zn(2+) binding.

Belongs to the metallo-dependent hydrolases superfamily. Adenosine and AMP deaminases family. Adenosine deaminase subfamily. Zn(2+) serves as cofactor.

It carries out the reaction adenosine + H2O + H(+) = inosine + NH4(+). It catalyses the reaction 2'-deoxyadenosine + H2O + H(+) = 2'-deoxyinosine + NH4(+). Its function is as follows. Catalyzes the hydrolytic deamination of adenosine and 2-deoxyadenosine. This is Adenosine deaminase from Mycobacterium avium (strain 104).